The primary structure comprises 277 residues: 4-hydroxybenzoate octaprenyltransferase (277 aa).

The next 8 helical transmembrane spans lie at 24-44 (FAAA…LGVI), 81-101 (VEAK…DLSL), 102-122 (NQYA…YPFM), 129-149 (PQVV…GAVI), 152-172 (LPLT…AYDT), 201-221 (IIAL…WLSE), 224-244 (IGYF…CWLT), and 255-275 (AFLN…VGIY).

It belongs to the UbiA prenyltransferase family. Mg(2+) serves as cofactor.

Its subcellular location is the cell inner membrane. The enzyme catalyses all-trans-octaprenyl diphosphate + 4-hydroxybenzoate = 4-hydroxy-3-(all-trans-octaprenyl)benzoate + diphosphate. Its pathway is cofactor biosynthesis; ubiquinone biosynthesis. Catalyzes the prenylation of para-hydroxybenzoate (PHB) with an all-trans polyprenyl group. Mediates the second step in the final reaction sequence of ubiquinone-8 (UQ-8) biosynthesis, which is the condensation of the polyisoprenoid side chain with PHB, generating the first membrane-bound Q intermediate 3-octaprenyl-4-hydroxybenzoate. This is 4-hydroxybenzoate octaprenyltransferase from Haemophilus ducreyi (strain 35000HP / ATCC 700724).